We begin with the raw amino-acid sequence, 69 residues long: UPF0434 protein Rmet_0534 (69 aa).

This sequence belongs to the UPF0434 family.

This Cupriavidus metallidurans (strain ATCC 43123 / DSM 2839 / NBRC 102507 / CH34) (Ralstonia metallidurans) protein is UPF0434 protein Rmet_0534.